We begin with the raw amino-acid sequence, 507 residues long: ATP synthase subunit alpha (507 aa).

170-177 lines the ATP pocket; that stretch reads GDRQTGKT.

Belongs to the ATPase alpha/beta chains family. F-type ATPases have 2 components, CF(1) - the catalytic core - and CF(0) - the membrane proton channel. CF(1) has five subunits: alpha(3), beta(3), gamma(1), delta(1), epsilon(1). CF(0) has three main subunits: a(1), b(2) and c(9-12). The alpha and beta chains form an alternating ring which encloses part of the gamma chain. CF(1) is attached to CF(0) by a central stalk formed by the gamma and epsilon chains, while a peripheral stalk is formed by the delta and b chains.

The protein resides in the cell inner membrane. It carries out the reaction ATP + H2O + 4 H(+)(in) = ADP + phosphate + 5 H(+)(out). In terms of biological role, produces ATP from ADP in the presence of a proton gradient across the membrane. The alpha chain is a regulatory subunit. This Thermosipho melanesiensis (strain DSM 12029 / CIP 104789 / BI429) protein is ATP synthase subunit alpha.